We begin with the raw amino-acid sequence, 678 residues long: ABC transporter F family member 2 (678 aa).

2 consecutive ABC transporter domains span residues 84 to 342 and 411 to 626; these read VRLE…EAQY and VTVK…AREL. ATP contacts are provided by residues 116 to 123 and 443 to 450; these read GVNGAGKT and GPNGCGKS. The tract at residues 630–678 is disordered; the sequence is AELEEKAPKVKAKSKMSKAEREARKKQKMKAFQASKKKSKSSKNAKRWN. Residues 653–678 are compositionally biased toward basic residues; that stretch reads RKKQKMKAFQASKKKSKSSKNAKRWN.

Belongs to the ABC transporter superfamily. ABCF family. EF3 (TC 3.A.1.121) subfamily.

In Arabidopsis thaliana (Mouse-ear cress), this protein is ABC transporter F family member 2 (ABCF2).